Here is a 316-residue protein sequence, read N- to C-terminus: HPr kinase/phosphorylase (316 aa).

Residues H146 and K167 contribute to the active site. 161-168 (GESGLGKS) provides a ligand contact to ATP. S168 is a Mg(2+) binding site. Residue D185 is the Proton acceptor; for phosphorylation activity. Proton donor; for dephosphorylation activity of the active site. An important for the catalytic mechanism of both phosphorylation and dephosphorylation region spans residues 209-218 (LEVRGIGLLD). Residue E210 participates in Mg(2+) binding. The active site involves R252. The tract at residues 273-278 (QVEAGR) is important for the catalytic mechanism of dephosphorylation.

The protein belongs to the HPrK/P family. Homohexamer. It depends on Mg(2+) as a cofactor.

It catalyses the reaction [HPr protein]-L-serine + ATP = [HPr protein]-O-phospho-L-serine + ADP + H(+). The catalysed reaction is [HPr protein]-O-phospho-L-serine + phosphate + H(+) = [HPr protein]-L-serine + diphosphate. Catalyzes the ATP- as well as the pyrophosphate-dependent phosphorylation of a specific serine residue in HPr, a phosphocarrier protein of the phosphoenolpyruvate-dependent sugar phosphotransferase system (PTS). HprK/P also catalyzes the pyrophosphate-producing, inorganic phosphate-dependent dephosphorylation (phosphorolysis) of seryl-phosphorylated HPr (P-Ser-HPr). This is HPr kinase/phosphorylase from Polaromonas naphthalenivorans (strain CJ2).